A 181-amino-acid polypeptide reads, in one-letter code: ATP synthase subunit delta (181 aa).

Belongs to the ATPase delta chain family. F-type ATPases have 2 components, F(1) - the catalytic core - and F(0) - the membrane proton channel. F(1) has five subunits: alpha(3), beta(3), gamma(1), delta(1), epsilon(1). F(0) has three main subunits: a(1), b(2) and c(10-14). The alpha and beta chains form an alternating ring which encloses part of the gamma chain. F(1) is attached to F(0) by a central stalk formed by the gamma and epsilon chains, while a peripheral stalk is formed by the delta and b chains.

The protein resides in the cell membrane. In terms of biological role, f(1)F(0) ATP synthase produces ATP from ADP in the presence of a proton or sodium gradient. F-type ATPases consist of two structural domains, F(1) containing the extramembraneous catalytic core and F(0) containing the membrane proton channel, linked together by a central stalk and a peripheral stalk. During catalysis, ATP synthesis in the catalytic domain of F(1) is coupled via a rotary mechanism of the central stalk subunits to proton translocation. Its function is as follows. This protein is part of the stalk that links CF(0) to CF(1). It either transmits conformational changes from CF(0) to CF(1) or is implicated in proton conduction. The chain is ATP synthase subunit delta from Oceanobacillus iheyensis (strain DSM 14371 / CIP 107618 / JCM 11309 / KCTC 3954 / HTE831).